The primary structure comprises 296 residues: Probable ribosomal RNA small subunit methyltransferase A (296 aa).

The segment covering 1–16 (MTDATSGSDPDSTTPV) has biased composition (polar residues). The tract at residues 1–25 (MTDATSGSDPDSTTPVDLTGEDFRD) is disordered. The S-adenosyl-L-methionine site is built by His-44, Leu-46, Gly-72, Glu-93, Asp-121, and Asn-136.

Belongs to the class I-like SAM-binding methyltransferase superfamily. rRNA adenine N(6)-methyltransferase family. RsmA subfamily.

The protein resides in the cytoplasm. Its function is as follows. Specifically dimethylates two adjacent adenosines in the loop of a conserved hairpin near the 3'-end of 16S rRNA in the 30S particle. May play a critical role in biogenesis of 30S subunits. This chain is Probable ribosomal RNA small subunit methyltransferase A, found in Haloquadratum walsbyi (strain DSM 16790 / HBSQ001).